A 459-amino-acid chain; its full sequence is Bifunctional protein GlmU (459 aa).

Residues 1–229 are pyrophosphorylase; that stretch reads MSNYAIILAA…FDESLGVNDR (229 aa). UDP-N-acetyl-alpha-D-glucosamine-binding positions include 8–11, K22, Q72, and 77–78; these read LAAG and GT. D102 lines the Mg(2+) pocket. The UDP-N-acetyl-alpha-D-glucosamine site is built by G139, E154, N169, and N227. N227 contacts Mg(2+). Residues 230-250 are linker; the sequence is VALATAEKVMRHRIARQHMVN. The segment at 251 to 459 is N-acetyltransferase; the sequence is GVTVVNPDSA…NKKPHHPSQK (209 aa). 2 residues coordinate UDP-N-acetyl-alpha-D-glucosamine: R332 and K350. Residue H362 is the Proton acceptor of the active site. UDP-N-acetyl-alpha-D-glucosamine contacts are provided by Y365 and N376. Acetyl-CoA-binding positions include A379, 385–386, S404, A422, and R439; that span reads NY.

The protein in the N-terminal section; belongs to the N-acetylglucosamine-1-phosphate uridyltransferase family. In the C-terminal section; belongs to the transferase hexapeptide repeat family. In terms of assembly, homotrimer. Mg(2+) serves as cofactor.

Its subcellular location is the cytoplasm. The enzyme catalyses alpha-D-glucosamine 1-phosphate + acetyl-CoA = N-acetyl-alpha-D-glucosamine 1-phosphate + CoA + H(+). It catalyses the reaction N-acetyl-alpha-D-glucosamine 1-phosphate + UTP + H(+) = UDP-N-acetyl-alpha-D-glucosamine + diphosphate. It participates in nucleotide-sugar biosynthesis; UDP-N-acetyl-alpha-D-glucosamine biosynthesis; N-acetyl-alpha-D-glucosamine 1-phosphate from alpha-D-glucosamine 6-phosphate (route II): step 2/2. Its pathway is nucleotide-sugar biosynthesis; UDP-N-acetyl-alpha-D-glucosamine biosynthesis; UDP-N-acetyl-alpha-D-glucosamine from N-acetyl-alpha-D-glucosamine 1-phosphate: step 1/1. The protein operates within bacterial outer membrane biogenesis; LPS lipid A biosynthesis. In terms of biological role, catalyzes the last two sequential reactions in the de novo biosynthetic pathway for UDP-N-acetylglucosamine (UDP-GlcNAc). The C-terminal domain catalyzes the transfer of acetyl group from acetyl coenzyme A to glucosamine-1-phosphate (GlcN-1-P) to produce N-acetylglucosamine-1-phosphate (GlcNAc-1-P), which is converted into UDP-GlcNAc by the transfer of uridine 5-monophosphate (from uridine 5-triphosphate), a reaction catalyzed by the N-terminal domain. In Streptococcus agalactiae serotype V (strain ATCC BAA-611 / 2603 V/R), this protein is Bifunctional protein GlmU.